We begin with the raw amino-acid sequence, 184 residues long: Large ribosomal subunit protein uL6 (184 aa).

It belongs to the universal ribosomal protein uL6 family. As to quaternary structure, part of the 50S ribosomal subunit.

In terms of biological role, this protein binds to the 23S rRNA, and is important in its secondary structure. It is located near the subunit interface in the base of the L7/L12 stalk, and near the tRNA binding site of the peptidyltransferase center. The protein is Large ribosomal subunit protein uL6 of Thermococcus kodakarensis (strain ATCC BAA-918 / JCM 12380 / KOD1) (Pyrococcus kodakaraensis (strain KOD1)).